A 141-amino-acid chain; its full sequence is Putative pre-16S rRNA nuclease (141 aa).

It belongs to the YqgF nuclease family.

The protein resides in the cytoplasm. Functionally, could be a nuclease involved in processing of the 5'-end of pre-16S rRNA. This chain is Putative pre-16S rRNA nuclease, found in Coxiella burnetii (strain CbuK_Q154) (Coxiella burnetii (strain Q154)).